Reading from the N-terminus, the 439-residue chain is Capsid vertex component 1 (439 aa).

This sequence belongs to the herpesviridae CVC1 protein family. In terms of assembly, interacts (via C-terminus) with capsid vertex component 2/CVC2.

It localises to the virion. Its subcellular location is the host nucleus. In terms of biological role, capsid vertex-specific component that plays a role during viral DNA encapsidation, assuring correct genome cleavage and presumably stabilizing capsids that contain full-length viral genomes. In Homo sapiens (Human), this protein is Capsid vertex component 1.